An 82-amino-acid polypeptide reads, in one-letter code: NAD(P)H-quinone oxidoreductase subunit O (82 aa).

Belongs to the complex I NdhO subunit family. As to quaternary structure, NDH-1 can be composed of about 15 different subunits; different subcomplexes with different compositions have been identified which probably have different functions.

It is found in the cellular thylakoid membrane. The catalysed reaction is a plastoquinone + NADH + (n+1) H(+)(in) = a plastoquinol + NAD(+) + n H(+)(out). It carries out the reaction a plastoquinone + NADPH + (n+1) H(+)(in) = a plastoquinol + NADP(+) + n H(+)(out). NDH-1 shuttles electrons from an unknown electron donor, via FMN and iron-sulfur (Fe-S) centers, to quinones in the respiratory and/or the photosynthetic chain. The immediate electron acceptor for the enzyme in this species is believed to be plastoquinone. Couples the redox reaction to proton translocation, and thus conserves the redox energy in a proton gradient. Cyanobacterial NDH-1 also plays a role in inorganic carbon-concentration. In Prochlorococcus marinus (strain MIT 9211), this protein is NAD(P)H-quinone oxidoreductase subunit O.